A 40-amino-acid polypeptide reads, in one-letter code: Dolichyl-diphosphooligosaccharide--protein glycosyltransferase subunit 4 (40 aa).

Residues 1-4 (MITD) are Lumenal-facing. A helical transmembrane segment spans residues 5–25 (VQLAIFSNVLGVFLFLLVVAY). At 26-40 (HYINANTGKSSIKNK) the chain is on the cytoplasmic side.

Belongs to the OST4 family. In terms of assembly, component of the oligosaccharyltransferase (OST) complex.

Its subcellular location is the endoplasmic reticulum membrane. Subunit of the oligosaccharyl transferase (OST) complex that catalyzes the initial transfer of a defined glycan (Glc(3)Man(9)GlcNAc(2) in eukaryotes) from the lipid carrier dolichol-pyrophosphate to an asparagine residue within an Asn-X-Ser/Thr consensus motif in nascent polypeptide chains, the first step in protein N-glycosylation. N-glycosylation occurs cotranslationally and the complex associates with the Sec61 complex at the channel-forming translocon complex that mediates protein translocation across the endoplasmic reticulum (ER). All subunits are required for a maximal enzyme activity. The sequence is that of Dolichyl-diphosphooligosaccharide--protein glycosyltransferase subunit 4 from Drosophila mojavensis (Fruit fly).